Here is a 437-residue protein sequence, read N- to C-terminus: Phosphoribosylamine--glycine ligase (437 aa).

An ATP-grasp domain is found at 110–322 (KNLLRSADIP…LVEVMQAVVD (213 aa)). 142–203 (EPTDPVNVVV…EERLTGPEVS (62 aa)) is an ATP binding site. Residues Glu292 and Asn294 each coordinate Mg(2+).

It belongs to the GARS family. The cofactor is Mg(2+). It depends on Mn(2+) as a cofactor.

It carries out the reaction 5-phospho-beta-D-ribosylamine + glycine + ATP = N(1)-(5-phospho-beta-D-ribosyl)glycinamide + ADP + phosphate + H(+). It functions in the pathway purine metabolism; IMP biosynthesis via de novo pathway; N(1)-(5-phospho-D-ribosyl)glycinamide from 5-phospho-alpha-D-ribose 1-diphosphate: step 2/2. This Rhodopirellula baltica (strain DSM 10527 / NCIMB 13988 / SH1) protein is Phosphoribosylamine--glycine ligase.